Here is a 460-residue protein sequence, read N- to C-terminus: Interleukin-6 receptor subunit alpha (460 aa).

The N-terminal stretch at 1–19 is a signal peptide; the sequence is MLTVGCTLLVALLAAPAVA. The region spanning 20-116 is the Ig-like C2-type domain; the sequence is LVLGSCRALE…DVPPEEPKLS (97 aa). Topologically, residues 20-364 are extracellular; the sequence is LVLGSCRALE…VQESSSMSLP (345 aa). 4 disulfide bridges follow: cysteine 25-cysteine 190, cysteine 47-cysteine 92, cysteine 117-cysteine 128, and cysteine 162-cysteine 173. N-linked (GlcNAc...) asparagine glycans are attached at residues asparagine 32 and asparagine 55. 2 Fibronectin type-III domains span residues 109-214 and 215-313; these read PPEE…VQPD and PPAN…TPWI. Asparagine 150 carries an N-linked (GlcNAc...) asparagine glycan. Asparagine 218 carries N-linked (GlcNAc...) asparagine glycosylation. A WSXWS motif motif is present at residues 300–304; the sequence is WSEWS. The helical transmembrane segment at 365–385 threads the bilayer; that stretch reads TFLVAGGSLAFGLLLCVFIIL. At 386–460 the chain is on the cytoplasmic side; it reads RLKQKWKSEA…NSNRDYLFPR (75 aa).

It belongs to the type I cytokine receptor family. Type 3 subfamily. As to quaternary structure, component of a hexamer of two molecules each of IL6, IL6R and IL6ST; first binds to IL6 to associate with the signaling subunit IL6ST. Interacts (via N-terminal ectodomain) with SORL1; this interaction may affect IL6-binding to IL6R, hence decrease IL6 'classic-signaling'. Also interacts with SORL1; this interaction leads to soluble IL6R internalization. May form a trimeric complex with the soluble SORL1 ectodomain and circulating IL6 receptor; this interaction might stabilize circulating IL6, hence promote IL6 'trans-signaling'. In terms of processing, a short soluble form is also released from the membrane by proteolysis. The sIL6R is formed by limited proteolysis of membrane-bound receptors, a process referred to as ectodomain shedding. mIL6R is cleaved by the proteases ADAM10 and ADAM17. Post-translationally, glycosylated. Glycosylation is dispensable for transport, signaling, and cell-surface turnover. Glycosylation at Asn-55 is a protease-regulatory exosite. Glycosylation is required for ADAM17-mediated proteolysis. As to expression, expressed by dendritic cells. Detected in the cerebrospinal fluid.

The protein resides in the cell membrane. It localises to the secreted. Classic and trans-signaling are both inhibited by tocilizumab, a humanized monoclonal antibody that blocks interleukin IL6R signaling. Part of the receptor for interleukin 6. Binds to IL6 with low affinity, but does not transduce a signal. Signal activation necessitate an association with IL6ST. Activation leads to the regulation of the immune response, acute-phase reactions and hematopoiesis. The interaction with membrane-bound IL6R and IL6ST stimulates 'classic signaling', the restricted expression of the IL6R limits classic IL6 signaling to only a few tissues such as the liver and some cells of the immune system. Whereas the binding of IL6 and soluble IL6R to IL6ST stimulates 'trans-signaling'. Alternatively, 'cluster signaling' occurs when membrane-bound IL6:IL6R complexes on transmitter cells activate IL6ST receptors on neighboring receiver cells. Functionally, signaling via the membrane-bound IL6R is mostly regenerative and anti-inflammatory. Drives naive CD4(+) T cells to the Th17 lineage, through 'cluster signaling' by dendritic cells. In terms of biological role, soluble form of IL6 receptor (sIL6R) that acts as an agonist of IL6 activity. The IL6:sIL6R complex (hyper-IL6) binds to IL6ST/gp130 on cell surfaces and induces signaling also on cells that do not express membrane-bound IL6R in a process called IL6 'trans-signaling'. sIL6R is causative for the pro-inflammatory properties of IL6 and an important player in the development of chronic inflammatory diseases. In complex with IL6, is required for induction of VEGF production. Plays a protective role during liver injury, being required for maintenance of tissue regeneration. 'Trans-signaling' in central nervous system regulates energy and glucose homeostasis. The chain is Interleukin-6 receptor subunit alpha from Mus musculus (Mouse).